The chain runs to 337 residues: Regulator of RpoS (337 aa).

In terms of domain architecture, Response regulatory spans 9-123 (QILIVEDEQV…NRLREMVFAC (115 aa)). Residue Asp58 is modified to 4-aspartylphosphate.

The protein belongs to the RssB family. As to quaternary structure, binds to RpoS. In terms of processing, phosphorylated. Phosphorylation stimulates the interaction with RpoS and, therefore, the proteolysis of RpoS.

Its function is as follows. Regulates the turnover of the sigma S factor (RpoS) by promoting its proteolysis in exponentially growing cells. Acts by binding and delivering RpoS to the ClpXP protease. RssB is not co-degraded with RpoS, but is released from the complex and can initiate a new cycle of RpoS recognition and degradation. The chain is Regulator of RpoS from Shigella flexneri.